Here is a 158-residue protein sequence, read N- to C-terminus: Style cell-cycle inhibitor 1-B (158 aa).

Basic and acidic residues-rich tracts occupy residues 1 to 11 (MGSDKKTTEEK) and 22 to 47 (PRDEVKSKRQNIKGDEERRKEKDKSK). Positions 1-88 (MGSDKKTTEE…DKSKNKFEEL (88 aa)) are disordered. Basic residues-rich tracts occupy residues 48-58 (KEKHKSHKSKC) and 67-81 (GEKHKTKSHKHKDKS).

Specifically expressed in flowers pistils, especially in stigmas and styles. Barely detected in roots, stems, leaves, sepals, petals and stamen.

The protein resides in the nucleus. Component of the auxin signaling transduction pathway that regulates cell proliferation and differentiation during flowers stigmas and styles development. Involved in the regulation of auxin-related genes. This Nicotiana tabacum (Common tobacco) protein is Style cell-cycle inhibitor 1-B.